The primary structure comprises 142 residues: NTF2-related export protein 2 (142 aa).

Residues 17–136 (AAEEFVNIYY…WKIASDCFRF (120 aa)) form the NTF2 domain.

Associates with NXF1, NXF2, NXF3 and NXF5.

Its subcellular location is the nucleus. The protein localises to the cytoplasm. Regulator of protein export for NES-containing proteins. Also plays a role in mRNA nuclear export. This chain is NTF2-related export protein 2, found in Homo sapiens (Human).